The chain runs to 224 residues: EF-hand calcium-binding domain-containing protein 1 (224 aa).

A signal peptide spans methionine 1–serine 21. The EF-hand domain occupies isoleucine 115 to aspartate 150. Ca(2+) contacts are provided by aspartate 128, aspartate 130, aspartate 132, glutamate 134, and glutamate 139.

Component of the acid-soluble organic matrix of calcified layers of the shell (at protein level).

It localises to the secreted. The protein is EF-hand calcium-binding domain-containing protein 1 of Lottia gigantea (Giant owl limpet).